Here is a 1458-residue protein sequence, read N- to C-terminus: Probable serine/threonine-protein kinase yakA (1458 aa).

Over residues 32-76 the composition is skewed to low complexity; that stretch reads NNSLNSNDNTNTTNNNNNNNNNNNNNNNNNNNNNNNNNINNNNNN. The segment at 32 to 83 is disordered; that stretch reads NNSLNSNDNTNTTNNNNNNNNNNNNNNNNNNNNNNNNNINNNNNNGGMVGVN. The Protein kinase domain occupies 205 to 548; sequence YKVLDSLGQG…PMQAKEHPFI (344 aa). ATP contacts are provided by residues 211 to 219 and K234; that span reads LGQGTFGQV. D332 acts as the Proton acceptor in catalysis. 2 disordered regions span residues 441-462 and 545-571; these read HRHLGSNSDDNNNNNNNNNGKP and HPFITGQPYNGPFIPDPSKKRHFTYSQ. Positions 446 to 459 are enriched in low complexity; that stretch reads SNSDDNNNNNNNNN. Residues 588–643 adopt a coiled-coil conformation; it reads NQHQLFQQLQQQQQQQQQQQQQQQQQQQQQQQQQQQQQQHNQFQQQQQQQQQQQQS. Composition is skewed to low complexity over residues 659–709, 791–800, 808–853, and 861–870; these read TPYT…SFNF, SWGSDSSSIS, QKQM…NNVN, and DIPSDSFSSS. Disordered regions lie at residues 659–714 and 791–874; these read TPYT…NESF and SWGS…EGMD. The stretch at 878–927 forms a coiled coil; that stretch reads NLYQQQQQQQQQQQQQQQQQQQQQQQQQQQQQQQQQQLQYQQQFQTLQDL. Disordered stretches follow at residues 930–1095, 1128–1161, 1233–1347, 1375–1399, and 1435–1458; these read EGEK…PQMI, NQQNTPHLTPSNSSTNLLGKSASSPLKNSSGGAI, DYRP…SYQY, QQQQYKKDTPSLMMSPPMNGLKTSS, and QQLQQQQAPPQNRKQVVIGSYRET. 3 stretches are compositionally biased toward low complexity: residues 961-988, 1016-1042, and 1064-1093; these read QQTNNTQQQQQQQQQQQQQQQQQQQQQQ, QQFQQQQYKQQQKNLHHQQQQQQRFMQ, and QPLHQTYIPQQQQQQQQQQQQSQPTPFTPQ. Polar residues-rich tracts occupy residues 1128–1158 and 1233–1245; these read NQQNTPHLTPSNSSTNLLGKSASSPLKNSSG and DYRPQLFNKQSPP. Composition is skewed to low complexity over residues 1246–1255 and 1264–1279; these read SSYNSNKSFY and NNNNNNSRPTNQNFSN. The segment covering 1280–1291 has biased composition (polar residues); it reads SLLPSQQQNVIF. Low complexity predominate over residues 1292 to 1309; that stretch reads PQNSPPSSYNSSNSLSKS. Composition is skewed to polar residues over residues 1310-1321 and 1331-1344; these read GGNTVKNNSNTG and QRFNSTNNLLSGGS. 2 coiled-coil regions span residues 1346 to 1383 and 1409 to 1442; these read QYQQQQQQQQQQQQQQQQQQQQQQQQQQQQQQQYKKDT and RYQYQQQQLQQQFQQQQQQQQQQQIQQQLQQQQA.

This sequence belongs to the protein kinase superfamily. CMGC Ser/Thr protein kinase family. MNB/DYRK subfamily.

It localises to the cytoplasm. It catalyses the reaction L-seryl-[protein] + ATP = O-phospho-L-seryl-[protein] + ADP + H(+). It carries out the reaction L-threonyl-[protein] + ATP = O-phospho-L-threonyl-[protein] + ADP + H(+). The enzyme catalyses L-tyrosyl-[protein] + ATP = O-phospho-L-tyrosyl-[protein] + ADP + H(+). Functionally, general sensor of environmental conditions, such as heat stress, effecting changes through pkaC. Essential for survival to nitrosoative and oxidative stresses. Required for cell cycle control, not only at the onset but also during development (aggregation process and postaggregative development). In Dictyostelium discoideum (Social amoeba), this protein is Probable serine/threonine-protein kinase yakA (yakA).